The sequence spans 371 residues: Gustatory and pheromone receptor 39a, isoform A (371 aa).

The Cytoplasmic segment spans residues 1 to 41 (MSKVCRDLRIYLRLLHIMGMMCWHFDSDHCQLVATSGSERY). Residues 42–62 (AVVYAGCILVSTTAGFIFALL) traverse the membrane as a helical segment. Residues 63–80 (HPSRFHIAIYNQTGNFYE) lie on the Extracellular side of the membrane. N-linked (GlcNAc...) asparagine glycosylation occurs at Asn73. Residues 81–101 (AVIFRSTCVVLFLVYVILYAW) traverse the membrane as a helical segment. At 102-127 (RHRYRDLVQHILRLNRRCASSCTNQQ) the chain is on the cytoplasmic side. Residues 128–148 (FLHNIILYGMLTILCFGNYLH) form a helical membrane-spanning segment. At 149–161 (GYTRAGLATLPLA) the chain is on the extracellular side. Residues 162–182 (LCMLVYIFAFLVLCLLLMFFV) form a helical membrane-spanning segment. The Cytoplasmic segment spans residues 183-228 (SLKQVMTAGLIHYNQQLCQGDLISGLRGRQQILKLCGGELNECFGL). A helical transmembrane segment spans residues 229-249 (LMLPIVALVLLMAPSGPFFLI). The Extracellular portion of the chain corresponds to 250–263 (STVLEGKFRPDECL). A helical membrane pass occupies residues 264–284 (IMLLTSSTWDTPWMIMLVLML). Residues 285-340 (RTNGISEEANKTAKMLTKVPRTGTGLDRMIEKFLLKNLRQKPILTAYGFFALDKST) are Cytoplasmic-facing. The helical transmembrane segment at 341–361 (LFKLFTAIFTYMVILVQFKEM) threads the bilayer. Residues 362–371 (ENSTKSINKF) lie on the Extracellular side of the membrane. N-linked (GlcNAc...) asparagine glycosylation occurs at Asn363.

This sequence belongs to the insect chemoreceptor superfamily. Gustatory receptor (GR) family. Gr21a subfamily. In terms of tissue distribution, expressed in the adult labellar chemosensory neurons, and adult thorax and wing. In larvae, is expressed in neurons of the posterior pharyngeal sense organ.

It is found in the cell membrane. Gustatory receptor which mediates acceptance or avoidance behavior, depending on its substrates. Plays a role in sustaining courtship behavior in males, possibly through the reception of a stimulating arrestant pheromone. In Drosophila melanogaster (Fruit fly), this protein is Gustatory and pheromone receptor 39a, isoform A (Gr39a).